The following is a 680-amino-acid chain: tRNA 5-methylaminomethyl-2-thiouridine biosynthesis bifunctional protein MnmC (680 aa).

Residues 1-245 (MSHPPIQTAT…KREMLTGILP (245 aa)) are tRNA (mnm(5)s(2)U34)-methyltransferase. The segment at 270-680 (IGGGIVSALT…PVQQRVSVLS (411 aa)) is FAD-dependent cmnm(5)s(2)U34 oxidoreductase.

This sequence in the N-terminal section; belongs to the methyltransferase superfamily. tRNA (mnm(5)s(2)U34)-methyltransferase family. In the C-terminal section; belongs to the DAO family. FAD is required as a cofactor.

The protein localises to the cytoplasm. The catalysed reaction is 5-aminomethyl-2-thiouridine(34) in tRNA + S-adenosyl-L-methionine = 5-methylaminomethyl-2-thiouridine(34) in tRNA + S-adenosyl-L-homocysteine + H(+). Catalyzes the last two steps in the biosynthesis of 5-methylaminomethyl-2-thiouridine (mnm(5)s(2)U) at the wobble position (U34) in tRNA. Catalyzes the FAD-dependent demodification of cmnm(5)s(2)U34 to nm(5)s(2)U34, followed by the transfer of a methyl group from S-adenosyl-L-methionine to nm(5)s(2)U34, to form mnm(5)s(2)U34. This chain is tRNA 5-methylaminomethyl-2-thiouridine biosynthesis bifunctional protein MnmC, found in Yersinia enterocolitica serotype O:8 / biotype 1B (strain NCTC 13174 / 8081).